A 318-amino-acid chain; its full sequence is O-glucosyltransferase LpsA (318 aa).

This sequence belongs to the glycosyltransferase 90 family.

It functions in the pathway protein modification; protein glycosylation. Involved in lipopolysaccharide core biosynthesis. This chain is O-glucosyltransferase LpsA (lpsA), found in Dichelobacter nodosus (Bacteroides nodosus).